Consider the following 185-residue polypeptide: Elongation factor P (185 aa).

This sequence belongs to the elongation factor P family.

The protein localises to the cytoplasm. Its pathway is protein biosynthesis; polypeptide chain elongation. Its function is as follows. Involved in peptide bond synthesis. Stimulates efficient translation and peptide-bond synthesis on native or reconstituted 70S ribosomes in vitro. Probably functions indirectly by altering the affinity of the ribosome for aminoacyl-tRNA, thus increasing their reactivity as acceptors for peptidyl transferase. The sequence is that of Elongation factor P from Nitratidesulfovibrio vulgaris (strain DSM 19637 / Miyazaki F) (Desulfovibrio vulgaris).